We begin with the raw amino-acid sequence, 253 residues long: Polyhedrin (253 aa).

Major component of the virus occlusion bodies, which are large proteinaceous structures (polyhedra), that protect the virus from the outside environment for extended periods until they are ingested by insect larvae. The polypeptide is Polyhedrin (Orgyia pseudotsugata cypovirus (OpCPV)).